Consider the following 87-residue polypeptide: Class II metallothionein-like protein 1A (87 aa).

Belongs to the metallothionein superfamily. Type 15 family. As to expression, expressed in developing seeds.

Metallothioneins have a high content of cysteine residues that bind various heavy metals. This is Class II metallothionein-like protein 1A (MT21A) from Oryza sativa subsp. japonica (Rice).